The primary structure comprises 287 residues: Protein REVEILLE 2 (287 aa).

In terms of domain architecture, HTH myb-type spans 31 to 85 (TITKQREKWTEAEHEKFVEALKLYGRAWRRIEEHVGTKTAVQIRSHAQKFFTKVA). Positions 58-81 (WRRIEEHVGTKTAVQIRSHAQKFF) form a DNA-binding region, H-T-H motif. Positions 134 to 177 (QDEDNRSPTSVLSAHGSDGLGSIGSNSPNSSSAELSSHTEESLS) are disordered. The span at 156–169 (IGSNSPNSSSAELS) shows a compositional bias: low complexity.

It is found in the nucleus. Positive regulator for cold-responsive gene expression and cold tolerance. Part of a regulatory feedback loop that controls a subset of the circadian outputs and modulates the central oscillator. Negatively self-regulates its own expression. This chain is Protein REVEILLE 2 (RVE2), found in Arabidopsis thaliana (Mouse-ear cress).